The sequence spans 86 residues: Large ribosomal subunit protein bL27 (86 aa).

The interval 1–21 (MAHKKGGGSSRNGRDSESKRL) is disordered.

Belongs to the bacterial ribosomal protein bL27 family.

This is Large ribosomal subunit protein bL27 from Rubrobacter xylanophilus (strain DSM 9941 / JCM 11954 / NBRC 16129 / PRD-1).